Here is a 187-residue protein sequence, read N- to C-terminus: Elongation factor P (187 aa).

It belongs to the elongation factor P family.

Its subcellular location is the cytoplasm. Its pathway is protein biosynthesis; polypeptide chain elongation. Functionally, involved in peptide bond synthesis. Stimulates efficient translation and peptide-bond synthesis on native or reconstituted 70S ribosomes in vitro. Probably functions indirectly by altering the affinity of the ribosome for aminoacyl-tRNA, thus increasing their reactivity as acceptors for peptidyl transferase. The polypeptide is Elongation factor P (Parvibaculum lavamentivorans (strain DS-1 / DSM 13023 / NCIMB 13966)).